Consider the following 202-residue polypeptide: Recombination protein RecR (202 aa).

The C4-type zinc finger occupies 56–71 (CRVCGNLDSADPCSVC). The Toprim domain maps to 79-179 (GLICVVESVG…SVTRLAQGIP (101 aa)).

This sequence belongs to the RecR family.

In terms of biological role, may play a role in DNA repair. It seems to be involved in an RecBC-independent recombinational process of DNA repair. It may act with RecF and RecO. This is Recombination protein RecR from Granulibacter bethesdensis (strain ATCC BAA-1260 / CGDNIH1).